Reading from the N-terminus, the 345-residue chain is D-amino-acid oxidase (345 aa).

Residues S10, I13, S49, G53, and N55 each coordinate FAD. (R)-lactate contacts are provided by Y230 and R290. Y230 and R290 together coordinate anthranilate. FAD-binding residues include R290, S317, G320, Y321, and Q322. Residues 343–345 carry the Microbody targeting signal motif; sequence AKL.

It belongs to the DAMOX/DASOX family. FAD is required as a cofactor.

Its subcellular location is the peroxisome matrix. It carries out the reaction a D-alpha-amino acid + O2 + H2O = a 2-oxocarboxylate + H2O2 + NH4(+). It catalyses the reaction D-methionine + O2 + H2O = 4-methylsulfanyl-2-oxobutanoate + H2O2 + NH4(+). Catalyzes the oxidative deamination of D-amino acids with broad substrate specificity. Enables the organism to utilize D-amino acids as a source of nutrients. Enables the organism to utilize D-alanine as a nitrogen source, although it is not strictly required for this process. Also enables utilization of D-alanine as a carbon source. This is D-amino-acid oxidase from Candida boidinii (Yeast).